We begin with the raw amino-acid sequence, 103 residues long: Small ribosomal subunit protein uS10c (103 aa).

The protein belongs to the universal ribosomal protein uS10 family. In terms of assembly, part of the 30S ribosomal subunit.

The protein resides in the plastid. Its subcellular location is the chloroplast. Involved in the binding of tRNA to the ribosomes. The polypeptide is Small ribosomal subunit protein uS10c (Emiliania huxleyi (Coccolithophore)).